Here is a 161-residue protein sequence, read N- to C-terminus: ATP synthase subunit b 1 (161 aa).

Residues 3-23 (LDATFYALVGLILFFVLIAYL) traverse the membrane as a helical segment.

This sequence belongs to the ATPase B chain family. As to quaternary structure, F-type ATPases have 2 components, F(1) - the catalytic core - and F(0) - the membrane proton channel. F(1) has five subunits: alpha(3), beta(3), gamma(1), delta(1), epsilon(1). F(0) has three main subunits: a(1), b(2) and c(10-14). The alpha and beta chains form an alternating ring which encloses part of the gamma chain. F(1) is attached to F(0) by a central stalk formed by the gamma and epsilon chains, while a peripheral stalk is formed by the delta and b chains.

It is found in the cell inner membrane. In terms of biological role, f(1)F(0) ATP synthase produces ATP from ADP in the presence of a proton or sodium gradient. F-type ATPases consist of two structural domains, F(1) containing the extramembraneous catalytic core and F(0) containing the membrane proton channel, linked together by a central stalk and a peripheral stalk. During catalysis, ATP synthesis in the catalytic domain of F(1) is coupled via a rotary mechanism of the central stalk subunits to proton translocation. Component of the F(0) channel, it forms part of the peripheral stalk, linking F(1) to F(0). This is ATP synthase subunit b 1 from Sinorhizobium medicae (strain WSM419) (Ensifer medicae).